The chain runs to 714 residues: Methylmalonyl-CoA mutase (714 aa).

A B12-binding domain is found at 584-714; the sequence is RPRILIAKMG…VLNLISQHHD (131 aa). An adenosylcob(III)alamin-binding site is contributed by His597.

Belongs to the methylmalonyl-CoA mutase family. As to quaternary structure, homodimer. Interacts with ArgK. The cofactor is adenosylcob(III)alamin.

It catalyses the reaction (R)-methylmalonyl-CoA = succinyl-CoA. Its function is as follows. Catalyzes the interconversion of succinyl-CoA and methylmalonyl-CoA. Could be part of a pathway that converts succinate to propionate. This Escherichia coli (strain K12) protein is Methylmalonyl-CoA mutase (scpA).